The sequence spans 148 residues: Lysozyme C (148 aa).

Residues 1–18 (MKVLIILGLVLLSVMVQG) form the signal peptide. Residues 19-148 (KVFERCELAR…VSQYVQGCGV (130 aa)) enclose the C-type lysozyme domain. 4 disulfides stabilise this stretch: cysteine 24-cysteine 146, cysteine 48-cysteine 134, cysteine 83-cysteine 99, and cysteine 95-cysteine 113. Residues glutamate 53 and aspartate 71 contribute to the active site.

It belongs to the glycosyl hydrolase 22 family. As to quaternary structure, monomer.

The enzyme catalyses Hydrolysis of (1-&gt;4)-beta-linkages between N-acetylmuramic acid and N-acetyl-D-glucosamine residues in a peptidoglycan and between N-acetyl-D-glucosamine residues in chitodextrins.. In terms of biological role, lysozymes have primarily a bacteriolytic function; those in tissues and body fluids are associated with the monocyte-macrophage system and enhance the activity of immunoagents. This is Lysozyme C (LYZ) from Callithrix jacchus (White-tufted-ear marmoset).